The chain runs to 757 residues: Protein aardvark (757 aa).

Disordered regions lie at residues 39–63 (SSIN…DSNN), 122–166 (LEEN…SSIL), and 256–285 (SSNG…IESS). Positions 121 to 205 (ILEENNNNNN…FNQFNFLEGI (85 aa)) form a coiled coil. Low complexity-rich tracts occupy residues 125–164 (NNNN…SSSS) and 256–270 (SSNG…NNNN). The 47-residue stretch at 310 to 356 (QFDIFLIPTEMLVHLLSFLSANDLWRISLTCKRIWYIVDVFKFWELL) folds into the F-box domain. 6 ARM repeats span residues 454 to 498 (GGIS…SNDN), 506 to 548 (GGIQ…VAIE), 549 to 591 (GGIQ…SAKE), 592 to 634 (GGIG…ISRQ), 635 to 678 (NGIQ…IARE), and 679 to 723 (GGIN…RSGG).

The protein belongs to the beta-catenin family.

The protein localises to the cytoplasm. It is found in the cell junction. In terms of biological role, required to regulate pattern formation during multi-cellular stages of development and for the formation of adherens junctions. Plays a structural role during the regulation of stalk formation. Involved in cell signaling. Required for spore-cell differentiation. Overexpression increases number and size of cell junctions and reduces spore-cell formation. The polypeptide is Protein aardvark (aarA) (Dictyostelium discoideum (Social amoeba)).